Reading from the N-terminus, the 137-residue chain is Large ribosomal subunit protein uL16 (137 aa).

It belongs to the universal ribosomal protein uL16 family. As to quaternary structure, part of the 50S ribosomal subunit.

Its function is as follows. Binds 23S rRNA and is also seen to make contacts with the A and possibly P site tRNAs. The chain is Large ribosomal subunit protein uL16 from Maricaulis maris (strain MCS10) (Caulobacter maris).